Reading from the N-terminus, the 310-residue chain is Nucleotide-binding protein Ddes_0972 (310 aa).

An ATP-binding site is contributed by 30–37 (GLSGAGKS). 82–85 (DLRQ) serves as a coordination point for GTP.

It belongs to the RapZ-like family.

Displays ATPase and GTPase activities. This chain is Nucleotide-binding protein Ddes_0972, found in Desulfovibrio desulfuricans (strain ATCC 27774 / DSM 6949 / MB).